The following is a 223-amino-acid chain: NAD(P)H-hydrate epimerase (223 aa).

The region spanning 9–209 (MQKIDTYTVN…DIGLLTPPDF (201 aa)) is the YjeF N-terminal domain. 57 to 61 (NNGAD) contacts (6S)-NADPHX. K(+)-binding residues include Asn-58 and Asp-119. Residues 123–129 (GTGLNNL) and Asp-152 each bind (6S)-NADPHX. Thr-155 is a K(+) binding site.

The protein belongs to the NnrE/AIBP family. K(+) is required as a cofactor.

The enzyme catalyses (6R)-NADHX = (6S)-NADHX. It carries out the reaction (6R)-NADPHX = (6S)-NADPHX. Its function is as follows. Catalyzes the epimerization of the S- and R-forms of NAD(P)HX, a damaged form of NAD(P)H that is a result of enzymatic or heat-dependent hydration. This is a prerequisite for the S-specific NAD(P)H-hydrate dehydratase to allow the repair of both epimers of NAD(P)HX. The polypeptide is NAD(P)H-hydrate epimerase (Leuconostoc gelidum subsp. gasicomitatum (strain DSM 15947 / CCUG 46042 / CECT 5767 / JCM 12535 / LMG 18811 / NBRC 113245 / TB1-10) (Leuconostoc gasicomitatum)).